A 1160-amino-acid polypeptide reads, in one-letter code: Envelope glycoprotein (1160 aa).

An N-terminal signal peptide occupies residues 1-22; sequence MDTPGSLQVIAIISLLLVGGAS. Topologically, residues 23–853 are extracellular; the sequence is QPATFLEKAL…DGSVWSQLQL (831 aa). 13 N-linked (GlcNAc...) asparagine; by host glycosylation sites follow: Asn-50, Asn-95, Asn-109, Asn-134, Asn-148, Asn-232, Asn-254, Asn-304, Asn-323, Asn-621, Asn-664, Asn-722, and Asn-771. The interval 230–251 is disordered; that stretch reads VPNSTLSPTGTTDFTKFTPNPI. A helical membrane pass occupies residues 854 to 874; the sequence is IIVVITCTIPLLWVLNTCLFF. The Cytoplasmic segment spans residues 875-1048; sequence KLRRAIRRER…VNQHAEYMGK (174 aa). A helical transmembrane segment spans residues 1049 to 1069; that stretch reads PVIVTLAGLVITPVGLAWIPL. Topologically, residues 1070-1127 are extracellular; that stretch reads PQQEPLEKLFMVPNSMPHVTVAMADYHETKEMGKIVKDINNEELLLVKPQLFKWGPEG. A helical transmembrane segment spans residues 1128-1148; sequence FFVACPLVIRGVVTGHSLLHI. The Cytoplasmic segment spans residues 1149–1160; it reads ACPATAVQAEGT.

In terms of assembly, the mature envelope protein (Env) consists of a trimer of SU-TM heterodimers attached by non-covalent interactions or by a labile interchain disulfide bond. Specific enzymatic cleavages in vivo yield mature proteins. Envelope glycoproteins are synthesized as an inactive precursor that is N-glycosylated and processed likely by host cell furin or by a furin-like protease in the Golgi to yield the mature SU and TM proteins. The cleavage site between SU and TM requires the minimal sequence [KR]-X-[KR]-R.

Its subcellular location is the virion membrane. It is found in the host cell membrane. (SU) attaches the virus to the host cell by binding to its receptor. This interaction triggers the refolding of the transmembrane protein (TM) and is thought to activate its fusogenic potential by unmasking its fusion peptide. Fusion occurs at the host cell plasma membrane. Functionally, (TM) acts as a class I viral fusion protein. Under the current model, the protein has at least 3 conformational states: pre-fusion native state, pre-hairpin intermediate state, and post-fusion hairpin state. During viral and target cell membrane fusion, the coiled coil regions (heptad repeats) assume a trimer-of-hairpins structure, positioning the fusion peptide in close proximity to the C-terminal region of the ectodomain. The formation of this structure appears to drive apposition and subsequent fusion of viral and target cell membranes. Membranes fusion leads to delivery of the nucleocapsid into the cytoplasm. The polypeptide is Envelope glycoprotein (env) (Walleye dermal sarcoma virus (WDSV)).